The chain runs to 341 residues: HTH-type sugar sensing transcriptional regulator TrmBL1 (341 aa).

Residues 32–53 (SKATDVTKESGIPHTRIYDVLS) constitute a DNA-binding region (H-T-H motif).

The protein belongs to the transcriptional regulator TrmB family. Homotetramer. Forms homooctamers in the presence of maltotriose or maltose.

Repressor activity is regulated by binding of different sugars to TrmBL1. Binding of maltose and maltotriose results in derepression of the target genes. However, high sugar concentration results in formation of octamers with high affinity for DNA, which may prevent transcription of target genes. Global transcriptional repressor of the maltodextrin transport gene cluster (mdxE operon) and most likely of all genes encoding glycolytic enzymes. Acts by binding to the conserved TGM (Thermococcales-Glycolytic-Motif) sequences in their promoter region. Can also interact with non-TGM sequences. This is HTH-type sugar sensing transcriptional regulator TrmBL1 (trmBL1) from Pyrococcus furiosus (strain ATCC 43587 / DSM 3638 / JCM 8422 / Vc1).